Consider the following 193-residue polypeptide: MANLRTQKRLAASVLKCGKRKVWMDPNEISEISNANSRQNIRKLVKDGLVIRKPNLMHSRFRIRKTHAAKRLGRHTGYGKRKGTAEARMPSTVVWMRRQRVLRRLLRKYRESGKIDKHLYHTLYLEAKGNTFKHKRALIEHIQRAKAEANRTKLIQEQQDARRARAKAARQRRAKAVEEKREQIYTAAEKIEE.

The tract at residues 157 to 179 (EQQDARRARAKAARQRRAKAVEE) is disordered. The span at 164 to 174 (ARAKAARQRRA) shows a compositional bias: basic residues.

This sequence belongs to the eukaryotic ribosomal protein eL19 family. As to quaternary structure, component of the large ribosomal subunit (LSU). Mature yeast ribosomes consist of a small (40S) and a large (60S) subunit. The 40S small subunit contains 1 molecule of ribosomal RNA (18S rRNA) and at least 33 different proteins. The large 60S subunit contains 3 rRNA molecules (25S, 5.8S and 5S rRNA) and at least 46 different proteins. eL19 lies in close proximity to the binding site for eukaryotic initiation factor eIF4G.

Its subcellular location is the cytoplasm. Component of the ribosome, a large ribonucleoprotein complex responsible for the synthesis of proteins in the cell. The small ribosomal subunit (SSU) binds messenger RNAs (mRNAs) and translates the encoded message by selecting cognate aminoacyl-transfer RNA (tRNA) molecules. The large subunit (LSU) contains the ribosomal catalytic site termed the peptidyl transferase center (PTC), which catalyzes the formation of peptide bonds, thereby polymerizing the amino acids delivered by tRNAs into a polypeptide chain. The nascent polypeptides leave the ribosome through a tunnel in the LSU and interact with protein factors that function in enzymatic processing, targeting, and the membrane insertion of nascent chains at the exit of the ribosomal tunnel. eL19 may play a role in the last stages of translation initiation, in particular subunit joining and shedding/releasing factors. This chain is Large ribosomal subunit protein eL19B (rpl1902), found in Schizosaccharomyces pombe (strain 972 / ATCC 24843) (Fission yeast).